We begin with the raw amino-acid sequence, 376 residues long: 23S rRNA (uracil(747)-C(5))-methyltransferase RlmC (376 aa).

Residues Cys3, Cys11, Cys14, and Cys87 each contribute to the [4Fe-4S] cluster site. Positions 212, 241, 262, and 307 each coordinate S-adenosyl-L-methionine. The active-site Nucleophile is the Cys334.

Belongs to the class I-like SAM-binding methyltransferase superfamily. RNA M5U methyltransferase family. RlmC subfamily.

It catalyses the reaction uridine(747) in 23S rRNA + S-adenosyl-L-methionine = 5-methyluridine(747) in 23S rRNA + S-adenosyl-L-homocysteine + H(+). Functionally, catalyzes the formation of 5-methyl-uridine at position 747 (m5U747) in 23S rRNA. The polypeptide is 23S rRNA (uracil(747)-C(5))-methyltransferase RlmC (Salmonella typhimurium (strain LT2 / SGSC1412 / ATCC 700720)).